We begin with the raw amino-acid sequence, 143 residues long: Photosystem I reaction center subunit IV A, chloroplastic (143 aa).

A chloroplast-targeting transit peptide spans 1 to 44 (MAMTTASTVFVLPANVTSVAGASSSRSSVSFLPMRNAGSRLVVR). The segment at 43–85 (VRAAEDPAPASSSSKDSPAAAAAPDGATATKPKPPPIGPKRGS) is disordered. A compositionally biased stretch (low complexity) spans 48–73 (DPAPASSSSKDSPAAAAAPDGATATK).

It belongs to the PsaE family. 2 isoforms may exist. With or without the N-terminal alanine.

It localises to the plastid. Its subcellular location is the chloroplast thylakoid membrane. Functionally, stabilizes the interaction between PsaC and the PSI core, assists the docking of the ferredoxin to PSI and interacts with ferredoxin-NADP oxidoreductase. The chain is Photosystem I reaction center subunit IV A, chloroplastic (PSAE1) from Arabidopsis thaliana (Mouse-ear cress).